A 297-amino-acid polypeptide reads, in one-letter code: Bifunctional protein FolD 2 (297 aa).

NADP(+)-binding positions include 164–166, serine 193, and isoleucine 234; that span reads GRS.

Belongs to the tetrahydrofolate dehydrogenase/cyclohydrolase family. As to quaternary structure, homodimer.

The catalysed reaction is (6R)-5,10-methylene-5,6,7,8-tetrahydrofolate + NADP(+) = (6R)-5,10-methenyltetrahydrofolate + NADPH. It catalyses the reaction (6R)-5,10-methenyltetrahydrofolate + H2O = (6R)-10-formyltetrahydrofolate + H(+). It participates in one-carbon metabolism; tetrahydrofolate interconversion. Its function is as follows. Catalyzes the oxidation of 5,10-methylenetetrahydrofolate to 5,10-methenyltetrahydrofolate and then the hydrolysis of 5,10-methenyltetrahydrofolate to 10-formyltetrahydrofolate. This Haloarcula marismortui (strain ATCC 43049 / DSM 3752 / JCM 8966 / VKM B-1809) (Halobacterium marismortui) protein is Bifunctional protein FolD 2.